The following is a 140-amino-acid chain: Prepilin peptidase-dependent protein A (140 aa).

Positions 1 to 23 are excised as a propeptide; that stretch reads MLLLKASAICGKGNEGKRNKKGG. An N-methylphenylalanine modification is found at Phe24. A helical membrane pass occupies residues 24 to 44; that stretch reads FTLIELTVVLAIMAIILMVIA.

The protein resides in the membrane. Its function is as follows. Not yet known. In Clostridium perfringens (strain 13 / Type A), this protein is Prepilin peptidase-dependent protein A (ppdA).